The chain runs to 182 residues: Large ribosomal subunit protein uL5 (182 aa).

It belongs to the universal ribosomal protein uL5 family. As to quaternary structure, part of the 50S ribosomal subunit; part of the 5S rRNA/L5/L18/L25 subcomplex. Contacts the 5S rRNA and the P site tRNA. Forms a bridge to the 30S subunit in the 70S ribosome.

In terms of biological role, this is one of the proteins that bind and probably mediate the attachment of the 5S RNA into the large ribosomal subunit, where it forms part of the central protuberance. In the 70S ribosome it contacts protein S13 of the 30S subunit (bridge B1b), connecting the 2 subunits; this bridge is implicated in subunit movement. Contacts the P site tRNA; the 5S rRNA and some of its associated proteins might help stabilize positioning of ribosome-bound tRNAs. The polypeptide is Large ribosomal subunit protein uL5 (Thermus aquaticus).